The chain runs to 415 residues: Queuine tRNA-ribosyltransferase accessory subunit 2 (415 aa).

Residues cysteine 351, cysteine 353, cysteine 356, and histidine 382 each contribute to the Zn(2+) site.

Belongs to the queuine tRNA-ribosyltransferase family. QTRT2 subfamily. As to quaternary structure, heterodimer of a catalytic subunit QTRT1 and an accessory subunit QTRT2. Requires Zn(2+) as cofactor.

It localises to the cytoplasm. The protein localises to the mitochondrion outer membrane. Functionally, non-catalytic subunit of the queuine tRNA-ribosyltransferase (TGT) that catalyzes the base-exchange of a guanine (G) residue with queuine (Q) at position 34 (anticodon wobble position) in tRNAs with GU(N) anticodons (tRNA-Asp, -Asn, -His and -Tyr), resulting in the hypermodified nucleoside queuosine (7-(((4,5-cis-dihydroxy-2-cyclopenten-1-yl)amino)methyl)-7-deazaguanosine). The polypeptide is Queuine tRNA-ribosyltransferase accessory subunit 2 (Pongo abelii (Sumatran orangutan)).